Reading from the N-terminus, the 291-residue chain is Shikimate dehydrogenase (NADP(+)) (291 aa).

Residues 22 to 24 (SLS) and Thr69 contribute to the shikimate site. The active-site Proton acceptor is the Lys73. Shikimate is bound by residues Asn94 and Asp110. Residues 131–135 (GSGGA) and Leu226 each bind NADP(+). Position 228 (Tyr228) interacts with shikimate. Gly249 serves as a coordination point for NADP(+).

This sequence belongs to the shikimate dehydrogenase family. In terms of assembly, homodimer.

It catalyses the reaction shikimate + NADP(+) = 3-dehydroshikimate + NADPH + H(+). It participates in metabolic intermediate biosynthesis; chorismate biosynthesis; chorismate from D-erythrose 4-phosphate and phosphoenolpyruvate: step 4/7. Its function is as follows. Involved in the biosynthesis of the chorismate, which leads to the biosynthesis of aromatic amino acids. Catalyzes the reversible NADPH linked reduction of 3-dehydroshikimate (DHSA) to yield shikimate (SA). In Synechococcus sp. (strain JA-3-3Ab) (Cyanobacteria bacterium Yellowstone A-Prime), this protein is Shikimate dehydrogenase (NADP(+)).